We begin with the raw amino-acid sequence, 89 residues long: YcgL domain-containing protein Asuc_1390 (89 aa).

The YcgL domain maps to 1–85 (MLCAIYKSKK…KDDWLFTIEK (85 aa)).

This chain is YcgL domain-containing protein Asuc_1390, found in Actinobacillus succinogenes (strain ATCC 55618 / DSM 22257 / CCUG 43843 / 130Z).